Here is a 167-residue protein sequence, read N- to C-terminus: Small ribosomal subunit protein uS5 (167 aa).

In terms of domain architecture, S5 DRBM spans 12 to 75 (LQEKLIAVNR…EKARRSMVTI (64 aa)).

It belongs to the universal ribosomal protein uS5 family. Part of the 30S ribosomal subunit. Contacts proteins S4 and S8.

In terms of biological role, with S4 and S12 plays an important role in translational accuracy. Functionally, located at the back of the 30S subunit body where it stabilizes the conformation of the head with respect to the body. The sequence is that of Small ribosomal subunit protein uS5 from Vibrio cholerae serotype O1 (strain ATCC 39541 / Classical Ogawa 395 / O395).